We begin with the raw amino-acid sequence, 550 residues long: Acetyl-coenzyme A transporter 1 (550 aa).

Composition is skewed to basic and acidic residues over residues 1–12 (MSPTISHKDSSR) and 36–52 (DDSR…REVL). A disordered region spans residues 1–58 (MSPTISHKDSSRQRRSGMFSHALDMKSGPLPPGGWDDSRRDSVGGEGDREVLLGDAGP). The Cytoplasmic portion of the chain corresponds to 1–74 (MSPTISHKDS…PRSYRSELSS (74 aa)). At Ser42 the chain carries Phosphoserine. A helical transmembrane segment spans residues 75-95 (ILLLLFLYVLQGIPLGLAGSI). Over 96–113 (PLILQSKNVSYTDQAFFS) the chain is Extracellular. A glycan (N-linked (GlcNAc...) asparagine) is linked at Asn103. The chain crosses the membrane as a helical span at residues 114–134 (FVFWPFSLKLLWAPLVDAVYF). The Cytoplasmic segment spans residues 135–141 (KNFGRRK). A helical membrane pass occupies residues 142 to 162 (SWLVPTQYTLGIFMIYLSTQV). At 163 to 175 (DRLLGNIDGRTPD) the chain is on the extracellular side. Residues 176 to 196 (VVALTVTFFLFEFLAATQDIA) traverse the membrane as a helical segment. The Cytoplasmic segment spans residues 197–217 (VDGWALTMLSRENVGYASTCN). A helical transmembrane segment spans residues 218–238 (SVGQTAGYFLGNVLFLALESA). Topologically, residues 239–256 (DFCNKYLRFQPQPRGIVT) are extracellular. The helical transmembrane segment at 257–277 (LSDFLFFWGTVFLITTTLVAL) threads the bilayer. Topologically, residues 278–300 (LKKENREASIVKEETQGITDTYK) are cytoplasmic. Residues 301 to 321 (LLFSIIKMPAVLAFCLLILTS) form a helical membrane-spanning segment. At 322-344 (KIGFSAADAVTGLKLVEEGVPKE) the chain is on the extracellular side. The helical transmembrane segment at 345–365 (HLALLAVPMVPLQIILPLLIS) threads the bilayer. Topologically, residues 366–375 (KYTAGPQPLN) are cytoplasmic. A helical membrane pass occupies residues 376–396 (IFYKAMPYRLLLGLEYALLVW). Residues 397-405 (WTPKVEHQG) are Extracellular-facing. The helical transmembrane segment at 406-426 (GFPLYYYIIVLLSYALHQVTL) threads the bilayer. The Cytoplasmic portion of the chain corresponds to 427–509 (YSMYVSIMAF…LGGSCVTALD (83 aa)). A helical transmembrane segment spans residues 510–530 (GYYVESIICVLIGFGWWFFLG). The Extracellular segment spans residues 531-550 (PKFKKLQDEGPSSWKCKRNN).

It belongs to the SLC33A transporter family. As to quaternary structure, homodimerizes. As to expression, expressed in all adult tissues examined including brain, heart, kidney, liver and spleen, with maximum expression in liver and kidney.

The protein localises to the endoplasmic reticulum membrane. The catalysed reaction is acetyl-CoA(in) = acetyl-CoA(out). In terms of biological role, acetyl-CoA transporter that mediates active acetyl-CoA import through the endoplasmic reticulum (ER) membrane into the ER lumen where specific ER-based acetyl-CoA:lysine acetyltransferases are responsible for the acetylation of ER-based protein substrate, such as BACE1. Necessary for O-acetylation of gangliosides. This chain is Acetyl-coenzyme A transporter 1 (Slc33a1), found in Mus musculus (Mouse).